The primary structure comprises 261 residues: Hydroxyethylthiazole kinase (261 aa).

Residue Met40 participates in substrate binding. ATP-binding residues include Lys116 and Thr162. Position 189 (Gly189) interacts with substrate.

The protein belongs to the Thz kinase family. Requires Mg(2+) as cofactor.

The catalysed reaction is 5-(2-hydroxyethyl)-4-methylthiazole + ATP = 4-methyl-5-(2-phosphooxyethyl)-thiazole + ADP + H(+). Its pathway is cofactor biosynthesis; thiamine diphosphate biosynthesis; 4-methyl-5-(2-phosphoethyl)-thiazole from 5-(2-hydroxyethyl)-4-methylthiazole: step 1/1. Functionally, catalyzes the phosphorylation of the hydroxyl group of 4-methyl-5-beta-hydroxyethylthiazole (THZ). This chain is Hydroxyethylthiazole kinase, found in Methanosarcina acetivorans (strain ATCC 35395 / DSM 2834 / JCM 12185 / C2A).